The following is a 356-amino-acid chain: Holliday junction branch migration complex subunit RuvB (356 aa).

Positions Thr4–Tyr190 are large ATPase domain (RuvB-L). ATP-binding positions include Leu29, Arg30, Gly71, Lys74, Thr75, Thr76, Glu137–Tyr139, Arg180, Tyr190, and Arg227. Thr75 is a Mg(2+) binding site. The segment at Asp191–Asp261 is small ATPAse domain (RuvB-S). Residues Pro264–Arg356 are head domain (RuvB-H). 3 residues coordinate DNA: Arg300, Arg319, and Arg324.

The protein belongs to the RuvB family. Homohexamer. Forms an RuvA(8)-RuvB(12)-Holliday junction (HJ) complex. HJ DNA is sandwiched between 2 RuvA tetramers; dsDNA enters through RuvA and exits via RuvB. An RuvB hexamer assembles on each DNA strand where it exits the tetramer. Each RuvB hexamer is contacted by two RuvA subunits (via domain III) on 2 adjacent RuvB subunits; this complex drives branch migration. In the full resolvosome a probable DNA-RuvA(4)-RuvB(12)-RuvC(2) complex forms which resolves the HJ.

The protein localises to the cytoplasm. It carries out the reaction ATP + H2O = ADP + phosphate + H(+). Its function is as follows. The RuvA-RuvB-RuvC complex processes Holliday junction (HJ) DNA during genetic recombination and DNA repair, while the RuvA-RuvB complex plays an important role in the rescue of blocked DNA replication forks via replication fork reversal (RFR). RuvA specifically binds to HJ cruciform DNA, conferring on it an open structure. The RuvB hexamer acts as an ATP-dependent pump, pulling dsDNA into and through the RuvAB complex. RuvB forms 2 homohexamers on either side of HJ DNA bound by 1 or 2 RuvA tetramers; 4 subunits per hexamer contact DNA at a time. Coordinated motions by a converter formed by DNA-disengaged RuvB subunits stimulates ATP hydrolysis and nucleotide exchange. Immobilization of the converter enables RuvB to convert the ATP-contained energy into a lever motion, pulling 2 nucleotides of DNA out of the RuvA tetramer per ATP hydrolyzed, thus driving DNA branch migration. The RuvB motors rotate together with the DNA substrate, which together with the progressing nucleotide cycle form the mechanistic basis for DNA recombination by continuous HJ branch migration. Branch migration allows RuvC to scan DNA until it finds its consensus sequence, where it cleaves and resolves cruciform DNA. The chain is Holliday junction branch migration complex subunit RuvB from Burkholderia thailandensis (strain ATCC 700388 / DSM 13276 / CCUG 48851 / CIP 106301 / E264).